Here is a 397-residue protein sequence, read N- to C-terminus: Putative nickel insertion protein (397 aa).

It belongs to the LarC family.

The chain is Putative nickel insertion protein from Synechococcus sp. (strain JA-2-3B'a(2-13)) (Cyanobacteria bacterium Yellowstone B-Prime).